Reading from the N-terminus, the 264-residue chain is 3-methyl-2-oxobutanoate hydroxymethyltransferase (264 aa).

Residues aspartate 45 and aspartate 84 each contribute to the Mg(2+) site. Residues 45 to 46 (DS), aspartate 84, and lysine 113 contribute to the 3-methyl-2-oxobutanoate site. Glutamate 115 is a Mg(2+) binding site. Glutamate 182 functions as the Proton acceptor in the catalytic mechanism.

The protein belongs to the PanB family. In terms of assembly, homodecamer; pentamer of dimers. Mg(2+) is required as a cofactor.

The protein localises to the cytoplasm. It catalyses the reaction 3-methyl-2-oxobutanoate + (6R)-5,10-methylene-5,6,7,8-tetrahydrofolate + H2O = 2-dehydropantoate + (6S)-5,6,7,8-tetrahydrofolate. It functions in the pathway cofactor biosynthesis; (R)-pantothenate biosynthesis; (R)-pantoate from 3-methyl-2-oxobutanoate: step 1/2. Functionally, catalyzes the reversible reaction in which hydroxymethyl group from 5,10-methylenetetrahydrofolate is transferred onto alpha-ketoisovalerate to form ketopantoate. The sequence is that of 3-methyl-2-oxobutanoate hydroxymethyltransferase from Nitrosococcus oceani (strain ATCC 19707 / BCRC 17464 / JCM 30415 / NCIMB 11848 / C-107).